A 55-amino-acid polypeptide reads, in one-letter code: MAKKNKARLLVKLLSTAGTGFFYVRSRPKAAPKLAFIKYDPKIHKRVLFEESKMK.

This sequence belongs to the bacterial ribosomal protein bL33 family. Component of the mitochondrial large ribosomal subunit (mt-LSU). Mature yeast 74S mitochondrial ribosomes consist of a small (37S) and a large (54S) subunit. The 37S small subunit contains a 15S ribosomal RNA (15S mt-rRNA) and at least 32 different proteins. The 54S large subunit contains a 21S rRNA (21S mt-rRNA) and at least 45 different proteins. bL33m stabilizes the tRNA acceptor stem in the E-site.

The protein localises to the mitochondrion. Its function is as follows. Component of the mitochondrial ribosome (mitoribosome), a dedicated translation machinery responsible for the synthesis of mitochondrial genome-encoded proteins, including at least some of the essential transmembrane subunits of the mitochondrial respiratory chain. The mitoribosomes are attached to the mitochondrial inner membrane and translation products are cotranslationally integrated into the membrane. The protein is Large ribosomal subunit protein bL33m (mrpl39) of Schizosaccharomyces pombe (strain 972 / ATCC 24843) (Fission yeast).